The primary structure comprises 149 residues: SsrA-binding protein (149 aa).

The protein belongs to the SmpB family.

It is found in the cytoplasm. Functionally, required for rescue of stalled ribosomes mediated by trans-translation. Binds to transfer-messenger RNA (tmRNA), required for stable association of tmRNA with ribosomes. tmRNA and SmpB together mimic tRNA shape, replacing the anticodon stem-loop with SmpB. tmRNA is encoded by the ssrA gene; the 2 termini fold to resemble tRNA(Ala) and it encodes a 'tag peptide', a short internal open reading frame. During trans-translation Ala-aminoacylated tmRNA acts like a tRNA, entering the A-site of stalled ribosomes, displacing the stalled mRNA. The ribosome then switches to translate the ORF on the tmRNA; the nascent peptide is terminated with the 'tag peptide' encoded by the tmRNA and targeted for degradation. The ribosome is freed to recommence translation, which seems to be the essential function of trans-translation. The chain is SsrA-binding protein from Wolbachia pipientis wMel.